Consider the following 459-residue polypeptide: tRNA modification GTPase MnmE (459 aa).

Arginine 23, glutamate 85, and arginine 124 together coordinate (6S)-5-formyl-5,6,7,8-tetrahydrofolate. Positions 221 to 380 constitute a TrmE-type G domain; sequence GLSTAIIGRP…LEKAIADTFF (160 aa). Asparagine 231 is a K(+) binding site. GTP contacts are provided by residues 231–236, 250–256, and 275–278; these read NVGKSS, TEIPGTT, and DTAG. Serine 235 provides a ligand contact to Mg(2+). Residues threonine 250, isoleucine 252, and threonine 255 each coordinate K(+). A Mg(2+)-binding site is contributed by threonine 256. A (6S)-5-formyl-5,6,7,8-tetrahydrofolate-binding site is contributed by lysine 459.

The protein belongs to the TRAFAC class TrmE-Era-EngA-EngB-Septin-like GTPase superfamily. TrmE GTPase family. In terms of assembly, homodimer. Heterotetramer of two MnmE and two MnmG subunits. K(+) is required as a cofactor.

It is found in the cytoplasm. Its function is as follows. Exhibits a very high intrinsic GTPase hydrolysis rate. Involved in the addition of a carboxymethylaminomethyl (cmnm) group at the wobble position (U34) of certain tRNAs, forming tRNA-cmnm(5)s(2)U34. The chain is tRNA modification GTPase MnmE from Oceanobacillus iheyensis (strain DSM 14371 / CIP 107618 / JCM 11309 / KCTC 3954 / HTE831).